A 269-amino-acid polypeptide reads, in one-letter code: Type 4 prepilin-like proteins leader peptide-processing enzyme (269 aa).

7 consecutive transmembrane segments (helical) span residues 13-33, 102-122, 124-144, 147-167, 178-198, 210-230, and 249-269; these read MPVLATVGGLIIGSFLNVVIW, YPLVELLTALAFLLASLVWPE, GWALAVMILSAWLIAASVIDL, QWLPDVFTQGVLWTGLIAAWA, VTGVLVGFIAFYSLRWIAGIV, LLFAALGSWVGPLSLPNVALI, and LPFGPCLSLGGIATIYLQALF.

The protein belongs to the peptidase A24 family.

The protein resides in the cell inner membrane. The enzyme catalyses Typically cleaves a -Gly-|-Phe- bond to release an N-terminal, basic peptide of 5-8 residues from type IV prepilin, and then N-methylates the new N-terminal amino group, the methyl donor being S-adenosyl-L-methionine.. In terms of biological role, cleaves type-4 fimbrial leader sequence and methylates the N-terminal (generally Phe) residue. The chain is Type 4 prepilin-like proteins leader peptide-processing enzyme from Escherichia coli O78:H11 (strain H10407 / ETEC).